The sequence spans 261 residues: MSNALIRLEQVGVTFAGQNVLENIQLSVEPGQIVTLIGPNGAGKTTLVRAVLGLLKPDTGSVWRKPKLRVGYMPQKLHVDPTLPLSVLRFLRLVPGVDRTRALAALKEVGAEQVIDSPVQSISGGEMQRVLLARALLREPELLVLDEPVQGVDVAGQAELYSLITRLRDRHGCGVLMVSHDLHLVMSTTDQVVCLNRHVCCSGHPEQVSGDPAFVELFGKNAPSLAIYHHHHDHAHDLHGSVVTQPASGHAHVHGENCKHG.

In terms of domain architecture, ABC transporter spans 6–221 (IRLEQVGVTF…PAFVELFGKN (216 aa)). An ATP-binding site is contributed by 38-45 (GPNGAGKT).

It belongs to the ABC transporter superfamily. Zinc importer (TC 3.A.1.15.5) family. In terms of assembly, the complex is composed of two ATP-binding proteins (ZnuC), two transmembrane proteins (ZnuB) and a solute-binding protein (ZnuA).

It localises to the cell inner membrane. It catalyses the reaction Zn(2+)(out) + ATP(in) + H2O(in) = Zn(2+)(in) + ADP(in) + phosphate(in) + H(+)(in). Part of the ABC transporter complex ZnuABC involved in zinc import. Responsible for energy coupling to the transport system. This is Zinc import ATP-binding protein ZnuC from Pseudomonas fluorescens (strain ATCC BAA-477 / NRRL B-23932 / Pf-5).